The chain runs to 285 residues: tRNA uridine(34) hydroxylase (285 aa).

The region spanning 130–225 (RGDDVVFFDG…YGEAFGDTGL (96 aa)) is the Rhodanese domain. Cys-185 acts as the Cysteine persulfide intermediate in catalysis.

Belongs to the TrhO family.

It carries out the reaction uridine(34) in tRNA + AH2 + O2 = 5-hydroxyuridine(34) in tRNA + A + H2O. Functionally, catalyzes oxygen-dependent 5-hydroxyuridine (ho5U) modification at position 34 in tRNAs. The sequence is that of tRNA uridine(34) hydroxylase from Rhodococcus opacus (strain B4).